Consider the following 239-residue polypeptide: Pentatricopeptide repeat-containing protein DWY1, chloroplastic (239 aa).

The transit peptide at 1 to 35 directs the protein to the chloroplast; it reads MALEAAFSMSFCSFSVPKAIFCERETSSFQRITSR. Disordered regions lie at residues 40–59 and 101–122; these read AGES…KETS and HISP…SGGE. Residues 111–122 are compositionally biased toward basic and acidic residues; it reads VRGDKPEISGGE. Positions 113–144 are type E(+) motif; sequence GDKPEISGGEKKAIVDRSKAYVKLKSLGKEVR. The tract at residues 145-239 is type DYW motif; that stretch reads DAGYVPETKY…DGNCSCGDYW (95 aa).

The protein belongs to the PPR family. PCMP-H subfamily. As to quaternary structure, interacts with CRR4. Zn(2+) serves as cofactor.

The protein localises to the plastid. It is found in the chloroplast. In terms of biological role, plays a major role in single RNA editing events in chloroplasts. Acts as a site-recognition transacting factor involved in the edition of the site 1 of ndhD (ndhD-1 site corresponding to cytidine-2), which is a plastid-encoded subunit of the NADH-plastoquinone oxidoreductase. The interaction with CRR4 is required for its function in editing the ndhD-1 site. This Arabidopsis thaliana (Mouse-ear cress) protein is Pentatricopeptide repeat-containing protein DWY1, chloroplastic.